We begin with the raw amino-acid sequence, 320 residues long: MLIDQFGRKINYLRISVTQRCNFRCLYCMPKIPFDYQPKENLLSFEELFLFVKAAMDEGIEKIRITGGEPLLRKDLSIFIKMISDYKSDIDLAITTNGFLLKDFAKDLKNAGLKRLNISLDTLDHKKAKTLAQKDVLDSVLSGIDEALNLDLKVKLNTVALKNLNDDELISLLEFAKSKKAQIRFIEFMENTHAYGKLQGLKRDEIIQILSQKYQIQLIKKDEKAPVSIYKADDYEFGIIDPHSHEFCDSCNRIRLSAEGLLIPCLYFDEALSIKEAVRKGDIKAAVEILQEVLRNKPEKNKWSVVDNETSSRAFYQTGG.

A Radical SAM core domain is found at 5-225 (QFGRKINYLR…IQLIKKDEKA (221 aa)). R14 is a GTP binding site. Residues C21 and C25 each coordinate [4Fe-4S] cluster. Y27 provides a ligand contact to S-adenosyl-L-methionine. C28 provides a ligand contact to [4Fe-4S] cluster. Residue R64 coordinates GTP. G68 is an S-adenosyl-L-methionine binding site. T95 provides a ligand contact to GTP. S-adenosyl-L-methionine is bound at residue S119. Residue K155 coordinates GTP. M189 contacts S-adenosyl-L-methionine. Positions 248 and 251 each coordinate [4Fe-4S] cluster. 253–255 (RIR) is a binding site for GTP. Position 265 (C265) interacts with [4Fe-4S] cluster.

It belongs to the radical SAM superfamily. MoaA family. As to quaternary structure, monomer and homodimer. [4Fe-4S] cluster is required as a cofactor.

The enzyme catalyses GTP + AH2 + S-adenosyl-L-methionine = (8S)-3',8-cyclo-7,8-dihydroguanosine 5'-triphosphate + 5'-deoxyadenosine + L-methionine + A + H(+). It functions in the pathway cofactor biosynthesis; molybdopterin biosynthesis. Functionally, catalyzes the cyclization of GTP to (8S)-3',8-cyclo-7,8-dihydroguanosine 5'-triphosphate. The polypeptide is GTP 3',8-cyclase (Campylobacter jejuni (strain RM1221)).